The sequence spans 297 residues: UTP--glucose-1-phosphate uridylyltransferase (297 aa).

It belongs to the UDPGP type 2 family.

The catalysed reaction is alpha-D-glucose 1-phosphate + UTP + H(+) = UDP-alpha-D-glucose + diphosphate. Its pathway is carbohydrate metabolism; nucleotide-sugar metabolism. The protein operates within bacterial outer membrane biogenesis; lipopolysaccharide biosynthesis. May play a role in stationary phase survival. The protein is UTP--glucose-1-phosphate uridylyltransferase (galF) of Salmonella typhimurium (strain LT2 / SGSC1412 / ATCC 700720).